A 167-amino-acid polypeptide reads, in one-letter code: MLCGPLCRFLWLWPYLSYVEAVPIRKVQDDTKTLIKTIVTRINDISHTQSVSSKQRVAGLDFIPGLHPVLSLSKMDQTLAIYQQILTGLPSRNVVQISNDLENLRDLLHLLASSKNCPLPRARGLETLESLGGALEASLYSTEVVALSRLQASLQDMLWRLDLSPGC.

Residues 1 to 21 (MLCGPLCRFLWLWPYLSYVEA) form the signal peptide. An intrachain disulfide couples Cys117 to Cys167.

Belongs to the leptin family.

The protein resides in the secreted. Key player in the regulation of energy balance and body weight control. Once released into the circulation, has central and peripheral effects by binding LEPR, found in many tissues, which results in the activation of several major signaling pathways. In the hypothalamus, acts as an appetite-regulating factor that induces a decrease in food intake and an increase in energy consumption by inducing anorexinogenic factors and suppressing orexigenic neuropeptides, also regulates bone mass and secretion of hypothalamo-pituitary-adrenal hormones. In the periphery, increases basal metabolism, influences reproductive function, regulates pancreatic beta-cell function and insulin secretion, is pro-angiogenic for endothelial cell and affects innate and adaptive immunity. In the arcuate nucleus of the hypothalamus, activates by depolarization POMC neurons inducing FOS and SOCS3 expression to release anorexigenic peptides and inhibits by hyperpolarization NPY neurons inducing SOCS3 with a consequent reduction on release of orexigenic peptides. In addition to its known satiety inducing effect, has a modulatory role in nutrient absorption. In the intestine, reduces glucose absorption by enterocytes by activating PKC and leading to a sequential activation of p38, PI3K and ERK signaling pathways which exerts an inhibitory effect on glucose absorption. Acts as a growth factor on certain tissues, through the activation of different signaling pathways increases expression of genes involved in cell cycle regulation such as CCND1, via JAK2-STAT3 pathway, or VEGFA, via MAPK1/3 and PI3K-AKT1 pathways. May also play an apoptotic role via JAK2-STAT3 pathway and up-regulation of BIRC5 expression. Pro-angiogenic, has mitogenic activity on vascular endothelial cells and plays a role in matrix remodeling by regulating the expression of matrix metalloproteinases (MMPs) and tissue inhibitors of metalloproteinases (TIMPs). In innate immunity, modulates the activity and function of neutrophils by increasing chemotaxis and the secretion of oxygen radicals. Increases phagocytosis by macrophages and enhances secretion of pro-inflammatory mediators. Increases cytotoxic ability of NK cells. Plays a pro-inflammatory role, in synergy with IL1B, by inducing NOS2 which promotes the production of IL6, IL8 and Prostaglandin E2, through a signaling pathway that involves JAK2, PI3K, MAP2K1/MEK1 and MAPK14/p38. In adaptive immunity, promotes the switch of memory T-cells towards T helper-1 cell immune responses. Increases CD4(+)CD25(-) T-cell proliferation and reduces autophagy during TCR (T-cell receptor) stimulation, through MTOR signaling pathway activation and BCL2 up-regulation. In Felis catus (Cat), this protein is Leptin (LEP).